The primary structure comprises 2327 residues: Voltage-dependent N-type calcium channel subunit alpha-1B (2327 aa).

The interval 1–37 (MVRFGDELGGRYGGTGGGERARGGGAGGAGGPGQGGL) is disordered. The Cytoplasmic portion of the chain corresponds to 1 to 90 (MVRFGDELGG…DNVVRKYAKR (90 aa)). Over residues 10–37 (GRYGGTGGGERARGGGAGGAGGPGQGGL) the composition is skewed to gly residues. Arg-22 is modified (omega-N-methylarginine). The I repeat unit spans residues 82 to 359 (NVVRKYAKRI…LVLGVLSGEF (278 aa)). Residues 91–114 (ITEWPPFEYMILATIIANCIVLAL) traverse the membrane as a helical segment. Residues 115–131 (EQHLPDGDKTPMSERLD) are Extracellular-facing. The helical transmembrane segment at 132 to 152 (DTEPYFIGIFCFEAGIKIIAL) threads the bilayer. The Cytoplasmic portion of the chain corresponds to 153–163 (GFVFHKGSYLR). The helical transmembrane segment at 164 to 182 (NGWNVMDFVVVLTGILATA) threads the bilayer. Residues 183–187 (GTDFD) are Extracellular-facing. A helical transmembrane segment spans residues 188-211 (LRTLRAVRVLRPLKLVSGIPSLQV). The Cytoplasmic portion of the chain corresponds to 212 to 221 (VLKSIMKAMV). A helical membrane pass occupies residues 222-244 (PLLQIGLLLFFAILMFAIIGLEF). Residues 245 to 331 (YMGKFHKACF…NTNDAAGNTW (87 aa)) are Extracellular-facing. Asn-256 is a glycosylation site (N-linked (GlcNAc...) asparagine). Residues 332–356 (NWLYFIPLIIIGSFFMLNLVLGVLS) form a helical membrane-spanning segment. Topologically, residues 357–482 (GEFAKERERV…FFIRRMVKAQ (126 aa)) are cytoplasmic. Positions 379 to 396 (QQIERELNGYLEWIFKAE) are binding to the beta subunit. A Phosphoserine modification is found at Ser-411. 451 to 458 (ASLKSGKT) is a binding site for ATP. Residues 468–712 (EKMFRFFIRR…VFLAIAVDNL (245 aa)) form an II repeat. The chain crosses the membrane as a helical span at residues 483-501 (SFYWVVLCVVALNTLCVAM). Residues 502-511 (VHYNQPQRLT) lie on the Extracellular side of the membrane. A helical membrane pass occupies residues 512–534 (TALYFAEFVFLGLFLTEMSLKMY). Residues 535–544 (GLGPRSYFRS) are Cytoplasmic-facing. Residue Ser-544 participates in a 1,2-diacyl-sn-glycero-3-phospho-(1D-myo-inositol-4,5-bisphosphate) binding. Residues 545-566 (SFNCFDFGVIVGSIFEVVWAAI) form a helical membrane-spanning segment. Over 567 to 573 (KPGTSFG) the chain is Extracellular. The helical transmembrane segment at 574–586 (ISVLRALRLLRIF) threads the bilayer. Residues Arg-584 and Lys-587 each contribute to the a 1,2-diacyl-sn-glycero-3-phospho-(1D-myo-inositol-4,5-bisphosphate) site. The Cytoplasmic segment spans residues 587–604 (KVTKYWNSLRNLVVSLLN). A helical transmembrane segment spans residues 605–630 (SMKSIISLLFLLFLFIVVFALLGMQL). The Extracellular portion of the chain corresponds to 631-682 (FGGQFNFQDETPTTNFDTFPAAILTVFQILTGEDWNAVMYHGIESQGGVSKG). Residues 683–709 (MFSSFYFIVLTLFGNYTLLNVFLAIAV) traverse the membrane as a helical segment. Residues 710–1140 (DNLANAQELT…FCHYIVTMRY (431 aa)) are Cytoplasmic-facing. Phosphoserine occurs at positions 745, 748, and 783. 2 disordered regions span residues 802–1015 (TRHV…KEPH) and 1042–1066 (EQPEDADNQRNVTRMGSQPSDPSTT). Basic and acidic residues-rich tracts occupy residues 805–826 (VRPDMKTHMDRPLVVEPGRDGL), 869–885 (EQDRTESTETGAREERA), 914–924 (GSPEEATEREP), 961–972 (GPREAENNEEPT), and 988–1015 (PEREAAEKESNAVEGDKETRNHQPKEPH). Over residues 1050-1066 (QRNVTRMGSQPSDPSTT) the composition is skewed to polar residues. Ser-1058 is subject to Phosphoserine. Residues 1126-1412 (NLLRRFCHYI…IFVALIIITF (287 aa)) form an III repeat. A helical transmembrane segment spans residues 1141–1159 (FEMVILVVIALSSIALAAE). Topologically, residues 1160-1167 (DPVRTDSF) are extracellular. A helical membrane pass occupies residues 1168-1192 (RNNALKYMDYIFTGVFTFEMVIKMI). Residues 1193-1206 (DLGLLLHPGAYFRD) lie on the Cytoplasmic side of the membrane. The chain crosses the membrane as a helical span at residues 1207–1231 (LWNILDFIVVSGALVAFAFSSFMGG). The Extracellular segment spans residues 1232–1237 (SKGKDI). Residues 1238 to 1258 (NTIKSLRVLRVLRPLKTIKRL) traverse the membrane as a helical segment. The Cytoplasmic portion of the chain corresponds to 1259–1276 (PKLKAVFDCVVNSLKNVL). A helical transmembrane segment spans residues 1277-1296 (NILIVYMLFMFIFAVIAVQL). Over 1297–1383 (FKGKFFYCTD…EQGPSPGFRM (87 aa)) the chain is Extracellular. Residues 1384-1409 (ELSIFYVVYFVVFPFFFVNIFVALII) traverse the membrane as a helical segment. The Cytoplasmic portion of the chain corresponds to 1410 to 1464 (ITFQEQGDKVMSECSLEKNERACIDFAISAKPLTRYMPQNKQSFQYKTWTFVVSP). One copy of the IV repeat lies at 1449–1702 (NKQSFQYKTW…LFVAVIMDNF (254 aa)). Residues 1465–1483 (PFEYFIMAMIALNTVVLMM) traverse the membrane as a helical segment. Topologically, residues 1484-1491 (KFYDAPYE) are extracellular. Residues 1492–1516 (YELMLKCLNIVFTSMFSMECILKII) form a helical membrane-spanning segment. The Cytoplasmic portion of the chain corresponds to 1517–1526 (AFGVLNYFRD). Residues 1527–1548 (AWNVFDFVTVLGSITDILVTEI) traverse the membrane as a helical segment. The Extracellular segment spans residues 1549–1554 (ANNFIN). N-linked (GlcNAc...) asparagine glycosylation occurs at Asn-1554. A helical membrane pass occupies residues 1555–1573 (LSFLRLFRAARLIKLLRQG). Residues 1574-1592 (YTIRILLWTFVQSFKALPY) lie on the Cytoplasmic side of the membrane. A helical transmembrane segment spans residues 1593–1612 (VCLLIAMLFFIYAIIGMQVF). Residues 1613–1674 (GNIALDDDTS…ANASECGSDF (62 aa)) lie on the Extracellular side of the membrane. Asn-1666 is a glycosylation site (N-linked (GlcNAc...) asparagine). Residues 1675-1698 (AYFYFVSFIFLCSFLMLNLFVAVI) form a helical membrane-spanning segment. Over 1699-2327 (MDNFEYLTRD…YHHPDQDHWC (629 aa)) the chain is Cytoplasmic. In terms of domain architecture, EF-hand spans 1715–1750 (HHLDEFIRVWAEYDPAACGRISYNDMFEMLKHMSPP). Ca(2+) is bound by residues Asp-1728, Arg-1734, and Asp-1739. The tract at residues 1972 to 2193 (TLRGPDGEPQ…TPRPSITYKT (222 aa)) is disordered. Over residues 2039 to 2053 (SHHHHHRCHRRRDKK) the composition is skewed to basic residues. Residue Ser-2056 is modified to Phosphoserine. Residues 2088 to 2104 (CRRDRKQERGRSQERRQ) show a composition bias toward basic and acidic residues. 2 stretches are compositionally biased toward polar residues: residues 2131–2141 (PSLSSHPTSPT) and 2152–2168 (GSGSVNGSPLMSTSGAS). Phosphoserine occurs at positions 2212, 2221, and 2244. Disordered stretches follow at residues 2230–2249 (EPLSQPLAPGSRIGSDPYLG) and 2273–2292 (ATNSGRSSRTSYVSSLTSQS). Positions 2276–2292 (SGRSSRTSYVSSLTSQS) are enriched in low complexity.

It belongs to the calcium channel alpha-1 subunit (TC 1.A.1.11) family. CACNA1B subfamily. Multisubunit complex consisting of alpha-1, alpha-2, beta and delta subunits in a 1:1:1:1 ratio. The channel activity is directed by the pore-forming and voltage-sensitive alpha-1 subunit. In many cases, this subunit is sufficient to generate voltage-sensitive calcium channel activity. The auxiliary subunits beta and alpha-2/delta linked by a disulfide bridge regulate the channel activity. Interacts with RIMS1. Interacts with FMR1 (via C-terminus); this interaction induces a decrease in the number of presynaptic functional CACNA1B channels at the cell surface. Post-translationally, phosphorylated in vitro by CaM-kinase II, PKA, PKC and CGPK. As to expression, widespread expression throughout the brain. Highest levels in pyramidal cell layers C1, C2 and C3 of the hippocampus, in the dentate gyrus, in the cortex layers 2 et 4, in the subiculum and the habenula.

It localises to the membrane. The catalysed reaction is Ca(2+)(in) = Ca(2+)(out). With respect to regulation, is specifically blocked by omega-conotoxin GVIA. Is specifically blocked by omega-conotoxin MVIIA (ziconotide). Is insensitive to dihydropyridines (DHP). Voltage-sensitive calcium channels (VSCC) mediate the entry of calcium ions into excitable cells and are also involved in a variety of calcium-dependent processes, including muscle contraction, hormone or neurotransmitter release, gene expression, cell motility, cell division and cell death. This alpha-1B subunit gives rise to N-type calcium currents. N-type calcium channels belong to the 'high-voltage activated' (HVA) group. They are involved in pain signaling. Calcium channels containing alpha-1B subunit may play a role in directed migration of immature neurons. Mediates Ca(2+) release probability at hippocampal neuronal soma and synaptic terminals. This Mus musculus (Mouse) protein is Voltage-dependent N-type calcium channel subunit alpha-1B (Cacna1b).